The primary structure comprises 247 residues: Flavin-dependent thymidylate synthase (247 aa).

A ThyX domain is found at 1 to 237 (MDVKLLEATD…PKTFEYYEQE (237 aa)). DUMP is bound by residues 85-88 (QITR), 98-100 (SMR), and Arg176. An FAD-binding site is contributed by 88–90 (RHR). A ThyX motif motif is present at residues 88-98 (RHRHVSFDVQS). Residues 192-194 (NAR) and His198 each bind FAD. Arg203 is a dUMP binding site. Arg203 serves as the catalytic Involved in ionization of N3 of dUMP, leading to its activation.

Belongs to the thymidylate synthase ThyX family. Homotetramer. FAD is required as a cofactor.

It carries out the reaction dUMP + (6R)-5,10-methylene-5,6,7,8-tetrahydrofolate + NADPH + H(+) = dTMP + (6S)-5,6,7,8-tetrahydrofolate + NADP(+). It participates in pyrimidine metabolism; dTTP biosynthesis. Functionally, catalyzes the reductive methylation of 2'-deoxyuridine-5'-monophosphate (dUMP) to 2'-deoxythymidine-5'-monophosphate (dTMP) while utilizing 5,10-methylenetetrahydrofolate (mTHF) as the methyl donor, and NADPH and FADH(2) as the reductant. The sequence is that of Flavin-dependent thymidylate synthase from Haloarcula marismortui (strain ATCC 43049 / DSM 3752 / JCM 8966 / VKM B-1809) (Halobacterium marismortui).